We begin with the raw amino-acid sequence, 358 residues long: Probable branched-chain-amino-acid aminotransferase (358 aa).

Residue Lys196 is modified to N6-(pyridoxal phosphate)lysine.

It belongs to the class-IV pyridoxal-phosphate-dependent aminotransferase family. Pyridoxal 5'-phosphate is required as a cofactor.

It catalyses the reaction L-leucine + 2-oxoglutarate = 4-methyl-2-oxopentanoate + L-glutamate. It carries out the reaction L-isoleucine + 2-oxoglutarate = (S)-3-methyl-2-oxopentanoate + L-glutamate. The enzyme catalyses L-valine + 2-oxoglutarate = 3-methyl-2-oxobutanoate + L-glutamate. It functions in the pathway amino-acid biosynthesis; L-isoleucine biosynthesis; L-isoleucine from 2-oxobutanoate: step 4/4. Its pathway is amino-acid biosynthesis; L-leucine biosynthesis; L-leucine from 3-methyl-2-oxobutanoate: step 4/4. It participates in amino-acid biosynthesis; L-valine biosynthesis; L-valine from pyruvate: step 4/4. Functionally, acts on leucine, isoleucine and valine. This chain is Probable branched-chain-amino-acid aminotransferase (ilvE), found in Staphylococcus aureus (strain N315).